The following is an 807-amino-acid chain: Tyrosine-protein kinase receptor torso (807 aa).

A signal peptide spans 1 to 28 (MYSEGKLLKVFLIFAGFIIFSLCGEVVS). Residues 29–370 (QRYPPAPGLL…RAFTPGMLRW (342 aa)) are Extracellular-facing. Disulfide bonds link C46/C61, C81/C203, C210/C239, and C259/C265. N-linked (GlcNAc...) asparagine glycosylation is found at N54, N171, N183, and N195. N307, N323, and N344 each carry an N-linked (GlcNAc...) asparagine glycan. Residues 371-391 (VWAGATAGAGCAAGGLLAATL) traverse the membrane as a helical segment. Residues 392–807 (LCCGHRRATS…SPPVIQTKTA (416 aa)) lie on the Cytoplasmic side of the membrane. The 300-residue stretch at 439–738 (VLLHEVIGEG…PTFPELHQKL (300 aa)) folds into the Protein kinase domain. Residues 445 to 453 (IGEGAFGVV) and K468 contribute to the ATP site. Residue D607 is the Proton acceptor of the active site.

Belongs to the protein kinase superfamily. Tyr protein kinase family. Homodimer; disulfide-linked. Mg(2+) serves as cofactor. In terms of processing, may be auto-phosphorylated on tyrosine residues. At least one of the 3 cysteine residues Cys-381, Cys-393 or Cys-394 is involved in the formation of interchain disulfide bonds. The disulfide bond sites in the extracellular region are not involved in homodimer formation.

Its subcellular location is the cell membrane. It catalyses the reaction L-tyrosyl-[protein] + ATP = O-phospho-L-tyrosyl-[protein] + ADP + H(+). In terms of biological role, probable receptor tyrosine kinase. During postembryonic development, involved in the initiation of metamorphosis probably by inducing the production of ecdysone in response to prothoracicotropic hormone (PTTH). Binding to PTTH stimulates activation of canonical MAPK signaling leading to ERK phosphorylation. In Bombyx mori (Silk moth), this protein is Tyrosine-protein kinase receptor torso.